A 259-amino-acid chain; its full sequence is 3-deoxy-manno-octulosonate cytidylyltransferase (259 aa).

This sequence belongs to the KdsB family.

It is found in the cytoplasm. It carries out the reaction 3-deoxy-alpha-D-manno-oct-2-ulosonate + CTP = CMP-3-deoxy-beta-D-manno-octulosonate + diphosphate. Its pathway is nucleotide-sugar biosynthesis; CMP-3-deoxy-D-manno-octulosonate biosynthesis; CMP-3-deoxy-D-manno-octulosonate from 3-deoxy-D-manno-octulosonate and CTP: step 1/1. The protein operates within bacterial outer membrane biogenesis; lipopolysaccharide biosynthesis. Functionally, activates KDO (a required 8-carbon sugar) for incorporation into bacterial lipopolysaccharide in Gram-negative bacteria. This Xanthomonas oryzae pv. oryzae (strain KACC10331 / KXO85) protein is 3-deoxy-manno-octulosonate cytidylyltransferase.